A 227-amino-acid chain; its full sequence is PKHD-type hydroxylase Bamb_4479 (227 aa).

A Fe2OG dioxygenase domain is found at 80–179; the sequence is QVYPPLFNRY…RVASFFWVQS (100 aa). 3 residues coordinate Fe cation: His-98, Asp-100, and His-160. Residue Arg-170 coordinates 2-oxoglutarate.

Requires Fe(2+) as cofactor. The cofactor is L-ascorbate.

The chain is PKHD-type hydroxylase Bamb_4479 from Burkholderia ambifaria (strain ATCC BAA-244 / DSM 16087 / CCUG 44356 / LMG 19182 / AMMD) (Burkholderia cepacia (strain AMMD)).